The primary structure comprises 489 residues: MQRQVVFATSEMYPFSKSGGLGDVLGALPLALHRMGVPTAVVTPFYGRLRTADYPIRLTVSDCHVGYPWAPITCDVFEADYHGMPVYFIHRGEYFDRRYYYNDHKGDYFDNCERFVFFCRALLALMRRLGQPPAVLHAHDWQTALVPAFLYFLRQTDPFWQDTRSVLTIHNLAFQGRFASRLFETSGLPPQAWSVDGAEFWGDFNLLKAGIAYADKVTTVSPSYAREILGPAYGSGLDGILRKRAHALHGILNGADYDIWSPGNDRFLPCRYTPTDLAGKAQCKRALIEELGLDPHLARRPILGFIGRLRGQKGIDLLLDILPRLMESDVGVIILGEGNLTHEARALELMEAYRGRVCTIVSYTEDLAHRIQAGSDIFLMPSRYEPCGLTQMYALRYGTPPVATAVGGLRDTIVPWPSPESTGFTFGRCESAAFLRAILDAVHLWTTAPGDWQGMVRRAMAQAFTWERAGRAYLDLYAQLGVSPGEEGA.

K17 contributes to the ADP-alpha-D-glucose binding site.

This sequence belongs to the glycosyltransferase 1 family. Bacterial/plant glycogen synthase subfamily.

It carries out the reaction [(1-&gt;4)-alpha-D-glucosyl](n) + ADP-alpha-D-glucose = [(1-&gt;4)-alpha-D-glucosyl](n+1) + ADP + H(+). It participates in glycan biosynthesis; glycogen biosynthesis. Its function is as follows. Synthesizes alpha-1,4-glucan chains using ADP-glucose. The protein is Glycogen synthase of Nitratidesulfovibrio vulgaris (strain ATCC 29579 / DSM 644 / CCUG 34227 / NCIMB 8303 / VKM B-1760 / Hildenborough) (Desulfovibrio vulgaris).